The following is a 266-amino-acid chain: Undecaprenyl-diphosphatase (266 aa).

8 consecutive transmembrane segments (helical) span residues 1–21, 39–59, 87–107, 115–135, 144–164, 183–203, 218–238, and 246–266; these read MDTF…FLPI, QGLS…VMYF, WWII…KDFI, AVIA…DRMF, VGWK…IPGT, AAAR…AILV, ALSL…HLFL, and MTPF…FMFA.

This sequence belongs to the UppP family.

It is found in the cell inner membrane. The catalysed reaction is di-trans,octa-cis-undecaprenyl diphosphate + H2O = di-trans,octa-cis-undecaprenyl phosphate + phosphate + H(+). Catalyzes the dephosphorylation of undecaprenyl diphosphate (UPP). Confers resistance to bacitracin. The protein is Undecaprenyl-diphosphatase of Shewanella sediminis (strain HAW-EB3).